We begin with the raw amino-acid sequence, 353 residues long: UPF0283 membrane protein YPTS_2342 (353 aa).

3 helical membrane-spanning segments follow: residues 71–91 (MVTAGMVILGASVIAQSVQWV), 101–121 (IALGATTAGGLIILAGVGSVV), and 214–234 (ESALMIAVSPLALVDMAFIAW).

The protein belongs to the UPF0283 family.

The protein resides in the cell inner membrane. This is UPF0283 membrane protein YPTS_2342 from Yersinia pseudotuberculosis serotype IB (strain PB1/+).